Here is a 407-residue protein sequence, read N- to C-terminus: Betaine--homocysteine S-methyltransferase 1 (407 aa).

The 304-residue stretch at 11–314 (RGILERLNAG…YHIRAIAEEL (304 aa)) folds into the Hcy-binding domain. N6-succinyllysine is present on residues Lys40, Lys93, and Lys98. Residue Cys217 participates in Zn(2+) binding. Residues Lys232 and Lys241 each carry the N6-succinyllysine modification. Cys299 and Cys300 together coordinate Zn(2+). The residue at position 330 (Ser330) is a Phosphoserine. 2 positions are modified to N6-succinyllysine: Lys340 and Lys377.

In terms of assembly, homotetramer. The cofactor is Zn(2+). In terms of tissue distribution, highly expressed in liver and kidney (at protein level). Expressed at lower levels in testis, lung, cerebellum, skeletal muscle and pancreas (at protein level).

Its subcellular location is the cytoplasm. It is found in the cytosol. It localises to the nucleus. It carries out the reaction L-homocysteine + glycine betaine = N,N-dimethylglycine + L-methionine. The protein operates within amine and polyamine degradation; betaine degradation; sarcosine from betaine: step 1/2. It participates in amino-acid biosynthesis; L-methionine biosynthesis via de novo pathway; L-methionine from L-homocysteine (BhmT route): step 1/1. Its function is as follows. Involved in the regulation of homocysteine metabolism. Converts betaine and homocysteine to dimethylglycine and methionine, respectively. This reaction is also required for the irreversible oxidation of choline. The sequence is that of Betaine--homocysteine S-methyltransferase 1 from Rattus norvegicus (Rat).